Consider the following 638-residue polypeptide: LIM domain kinase 2 (638 aa).

LIM zinc-binding domains lie at C12–D63 and C72–C124. A PDZ domain is found at L152–P239. Residue T210 is modified to Phosphothreonine. Residues M257 to L266 show a composition bias toward polar residues. Positions M257–L304 are disordered. Positions D270–L279 are enriched in basic and acidic residues. Residues R286 to L304 are compositionally biased toward low complexity. Phosphoserine is present on residues S293 and S298. Residues L331–L608 form the Protein kinase domain. ATP contacts are provided by residues L337–A345 and K360. D451 is an active-site residue. The residue at position 505 (T505) is a Phosphothreonine; by ROCK1 and CDC42BP.

This sequence belongs to the protein kinase superfamily. TKL Ser/Thr protein kinase family. In terms of assembly, binds ROCK1 and MARF1. Interacts with NISCH. Phosphorylated on serine and/or threonine residues by ROCK1. Found in various tissues at moderate levels, except for testis, which shows very low expression.

Its subcellular location is the cytoplasm. The protein resides in the nucleus. It is found in the perinuclear region. The protein localises to the cytoskeleton. It localises to the spindle. Its subcellular location is the microtubule organizing center. The protein resides in the centrosome. It catalyses the reaction L-seryl-[protein] + ATP = O-phospho-L-seryl-[protein] + ADP + H(+). It carries out the reaction L-threonyl-[protein] + ATP = O-phospho-L-threonyl-[protein] + ADP + H(+). In terms of biological role, serine/threonine-protein kinase that plays an essential role in the regulation of actin filament dynamics. Acts downstream of several Rho family GTPase signal transduction pathways. Involved in astral microtubule organization and mitotic spindle orientation during early stages of mitosis by mediating phosphorylation of TPPP. Displays serine/threonine-specific phosphorylation of myelin basic protein and histone (MBP) in vitro. Suppresses ciliogenesis via multiple pathways; phosphorylation of CFL1, directional trafficking of ciliary vesicles to the ciliary base, and by facilitating YAP1 nuclear localization where it acts as a transcriptional corepressor of the TEAD4 target genes AURKA and PLK1. The chain is LIM domain kinase 2 (Limk2) from Rattus norvegicus (Rat).